The following is a 394-amino-acid chain: NAD(P)H-quinone oxidoreductase subunit H (394 aa).

Belongs to the complex I 49 kDa subunit family. NDH-1 can be composed of about 15 different subunits; different subcomplexes with different compositions have been identified which probably have different functions.

The protein localises to the cellular thylakoid membrane. The enzyme catalyses a plastoquinone + NADH + (n+1) H(+)(in) = a plastoquinol + NAD(+) + n H(+)(out). It catalyses the reaction a plastoquinone + NADPH + (n+1) H(+)(in) = a plastoquinol + NADP(+) + n H(+)(out). Functionally, NDH-1 shuttles electrons from an unknown electron donor, via FMN and iron-sulfur (Fe-S) centers, to quinones in the respiratory and/or the photosynthetic chain. The immediate electron acceptor for the enzyme in this species is believed to be plastoquinone. Couples the redox reaction to proton translocation, and thus conserves the redox energy in a proton gradient. Cyanobacterial NDH-1 also plays a role in inorganic carbon-concentration. This is NAD(P)H-quinone oxidoreductase subunit H from Trichodesmium erythraeum (strain IMS101).